A 175-amino-acid polypeptide reads, in one-letter code: ADP-ribosylation factor 6 (175 aa).

Glycine 2 carries the N-myristoyl glycine lipid modification. Residues 20–27, 63–67, and 122–125 contribute to the GTP site; these read GLDAAGKT, DVGGQ, and NKQD.

Belongs to the small GTPase superfamily. Arf family. In terms of tissue distribution, expressed in the head (at protein level).

Its subcellular location is the golgi apparatus. Activation is generally mediated by a guanine exchange factor (GEF), while inactivation through hydrolysis of bound GTP is catalyzed by a GTPase activating protein (GAP). May be activated by Efa6. Its function is as follows. GTP-binding protein involved in protein trafficking; may modulate vesicle budding and uncoating within the Golgi apparatus. Promotes cell movement and remodeling of the actin cytoskeleton during compound eye morphogenesis. Required for normal ethanol-induced tolerance and preference. Probably after Efa6-mediated activation, counteracts ethanol-induced sedation. The polypeptide is ADP-ribosylation factor 6 (Drosophila melanogaster (Fruit fly)).